The following is a 234-amino-acid chain: Ubiquitin domain-containing protein 2 (234 aa).

Residues 1–46 form a disordered region; sequence MGGCVGAQHDSSGSLNENSEGTGVALGRNQPLKKEKPKWKSDYPMT. Over residues 9 to 21 the composition is skewed to polar residues; that stretch reads HDSSGSLNENSEG. The span at 32–41 shows a compositional bias: basic and acidic residues; it reads LKKEKPKWKS. The region spanning 152–227 is the Ubiquitin-like domain; it reads SQLRLRLSTG…VQVIMSQPLQ (76 aa).

It localises to the cytoplasm. In Bos taurus (Bovine), this protein is Ubiquitin domain-containing protein 2 (UBTD2).